Consider the following 428-residue polypeptide: MTRSETLFEQAKKTIPGGVNSPVRAFNGVGGSPRFIEKADGAYIYDADGKAYIDYVGSWGPMILGHNHPKIRQAVLDAVENGLSFGAPTELEVRMAEKVIEMVPSMEQVRMVSSGTEATMSAIRLARGFTNRDKILKFEGCYHGHADCLLVKAGSGALTLGQPSSPGIPEDFAKHTLTAVYNELESVKTLFEQYPEEIACIILEPVAGNMNCIPPIPGFLEGLRALCDQYGALLIIDEVMTGFRVSKSGAQGHYGITPDLTTLGKVIGGGMPVGAFGGRKEVMQFIAPTGPVYQAGTLSGNPIAMSAGLAQMEELCAEGLYEELAAKTKRIAEGFKAAANKHGIPLSINYVGGMFGFFFTELEQVTRFDQVTQCDAEAFRTFYHGMLDEGVYLAPSAYEAGFLSMAHGEKELEETLAAADRVFARMAK.

Lys265 is subject to N6-(pyridoxal phosphate)lysine.

It belongs to the class-III pyridoxal-phosphate-dependent aminotransferase family. HemL subfamily. Homodimer. Pyridoxal 5'-phosphate is required as a cofactor.

The protein resides in the cytoplasm. The catalysed reaction is (S)-4-amino-5-oxopentanoate = 5-aminolevulinate. The protein operates within porphyrin-containing compound metabolism; protoporphyrin-IX biosynthesis; 5-aminolevulinate from L-glutamyl-tRNA(Glu): step 2/2. The protein is Glutamate-1-semialdehyde 2,1-aminomutase of Shewanella loihica (strain ATCC BAA-1088 / PV-4).